Consider the following 186-residue polypeptide: ADP-ribosylation factor-like protein 8A (186 aa).

The note=Mediates targeting to membranes intramembrane region spans 1 to 19 (MLALFNKLLDWFKALFWKE). Residues 29–35 (QYSGKTT), 71–75 (DIGGQ), and 130–133 (NKRD) each bind GTP.

This sequence belongs to the small GTPase superfamily. Arf family.

It is found in the late endosome membrane. The protein resides in the lysosome membrane. Its function is as follows. May play a role in lysosomes motility. Alternatively, may play a role in chromosome segregation. The polypeptide is ADP-ribosylation factor-like protein 8A (arl8a) (Xenopus tropicalis (Western clawed frog)).